The primary structure comprises 213 residues: Protein-L-isoaspartate O-methyltransferase (213 aa).

Residue S61 is part of the active site.

The protein belongs to the methyltransferase superfamily. L-isoaspartyl/D-aspartyl protein methyltransferase family.

Its subcellular location is the cytoplasm. The catalysed reaction is [protein]-L-isoaspartate + S-adenosyl-L-methionine = [protein]-L-isoaspartate alpha-methyl ester + S-adenosyl-L-homocysteine. Its function is as follows. Catalyzes the methyl esterification of L-isoaspartyl residues in peptides and proteins that result from spontaneous decomposition of normal L-aspartyl and L-asparaginyl residues. It plays a role in the repair and/or degradation of damaged proteins. In Petrotoga mobilis (strain DSM 10674 / SJ95), this protein is Protein-L-isoaspartate O-methyltransferase.